The chain runs to 61 residues: Small ribosomal subunit protein uS14 (61 aa).

The Zn(2+) site is built by Cys-24, Cys-27, Cys-40, and Cys-43.

The protein belongs to the universal ribosomal protein uS14 family. Zinc-binding uS14 subfamily. In terms of assembly, part of the 30S ribosomal subunit. Contacts proteins S3 and S10. Requires Zn(2+) as cofactor.

In terms of biological role, binds 16S rRNA, required for the assembly of 30S particles and may also be responsible for determining the conformation of the 16S rRNA at the A site. The chain is Small ribosomal subunit protein uS14 from Deinococcus deserti (strain DSM 17065 / CIP 109153 / LMG 22923 / VCD115).